Reading from the N-terminus, the 330-residue chain is DNA-directed RNA polymerase subunit alpha (330 aa).

Positions 1 to 225 (MSDLAIPTIS…KQFASLVSHS (225 aa)) are alpha N-terminal domain (alpha-NTD). Residues 237–330 (VKYTIPEEKY…KKKNKGIDED (94 aa)) form an alpha C-terminal domain (alpha-CTD) region.

This sequence belongs to the RNA polymerase alpha chain family. As to quaternary structure, homodimer. The RNAP catalytic core consists of 2 alpha, 1 beta, 1 beta' and 1 omega subunit. When a sigma factor is associated with the core the holoenzyme is formed, which can initiate transcription.

The enzyme catalyses RNA(n) + a ribonucleoside 5'-triphosphate = RNA(n+1) + diphosphate. Functionally, DNA-dependent RNA polymerase catalyzes the transcription of DNA into RNA using the four ribonucleoside triphosphates as substrates. This Dehalococcoides mccartyi (strain CBDB1) protein is DNA-directed RNA polymerase subunit alpha.